Consider the following 997-residue polypeptide: Bifunctional purine synthesis protein purC/E (997 aa).

The interval 1–305 (MTTAINNNIV…NNNNNNNNNS (305 aa)) is SAICAR synthetase. Composition is skewed to low complexity over residues 294 to 323 (LNNN…SLPN), 342 to 355 (QQQS…NVNS), and 524 to 536 (TSTS…TTTS). Disordered regions lie at residues 294–355 (LNNN…NVNS), 518–538 (IPVD…TSNA), 550–569 (INSN…QQQT), and 575–604 (PTII…SSII). Positions 305-997 (SNNNNNNTSS…GRKMGHVTQQ (693 aa)) are AIR carboxylase. Positions 575–597 (PTIINTPTPVRSSVSRSQSPLPS) are enriched in low complexity. Residues Arg728, Lys768, Gln779, 807-810 (EQYI), and Glu815 contribute to the ATP site. The ATP-grasp domain maps to 732–927 (KTFIQSLDIP…QFEQLIRCVC (196 aa)). The Mg(2+) site is built by Glu880 and Glu898. ATP is bound at residue 897–898 (NE).

The protein in the N-terminal section; belongs to the SAICAR synthetase family. This sequence in the C-terminal section; belongs to the AIR carboxylase family. Class I subfamily. It depends on Mg(2+) as a cofactor. Mn(2+) serves as cofactor.

It catalyses the reaction 5-amino-1-(5-phospho-D-ribosyl)imidazole-4-carboxylate + L-aspartate + ATP = (2S)-2-[5-amino-1-(5-phospho-beta-D-ribosyl)imidazole-4-carboxamido]succinate + ADP + phosphate + 2 H(+). The enzyme catalyses 5-amino-1-(5-phospho-D-ribosyl)imidazole-4-carboxylate + H(+) = 5-amino-1-(5-phospho-beta-D-ribosyl)imidazole + CO2. It functions in the pathway purine metabolism; IMP biosynthesis via de novo pathway; 5-amino-1-(5-phospho-D-ribosyl)imidazole-4-carboxylate from 5-amino-1-(5-phospho-D-ribosyl)imidazole (carboxylase route): step 1/1. Its pathway is purine metabolism; IMP biosynthesis via de novo pathway; 5-amino-1-(5-phospho-D-ribosyl)imidazole-4-carboxamide from 5-amino-1-(5-phospho-D-ribosyl)imidazole-4-carboxylate: step 1/2. Bifunctional enzyme involved in de novo IMP synthesis, an essential step for de nove purine synthesis. This Dictyostelium discoideum (Social amoeba) protein is Bifunctional purine synthesis protein purC/E (purC/E).